A 102-amino-acid polypeptide reads, in one-letter code: Small ribosomal subunit protein uS10 (102 aa).

The protein belongs to the universal ribosomal protein uS10 family. As to quaternary structure, part of the 30S ribosomal subunit.

Functionally, involved in the binding of tRNA to the ribosomes. The sequence is that of Small ribosomal subunit protein uS10 from Roseiflexus sp. (strain RS-1).